We begin with the raw amino-acid sequence, 293 residues long: Glutamyl-Q tRNA(Asp) synthetase (293 aa).

Residues 8–12 (RFAPT) and glutamate 44 contribute to the L-glutamate site. The 'HIGH' region motif lies at 11–21 (PTPSGYLHFGS). Zn(2+) is bound by residues cysteine 100, cysteine 102, tyrosine 114, and cysteine 118. L-glutamate-binding residues include tyrosine 171 and arginine 189. The short motif at 227-231 (KLGKS) is the 'KMSKS' region element. Lysine 230 contacts ATP.

The protein belongs to the class-I aminoacyl-tRNA synthetase family. GluQ subfamily. The cofactor is Zn(2+).

Its function is as follows. Catalyzes the tRNA-independent activation of glutamate in presence of ATP and the subsequent transfer of glutamate onto a tRNA(Asp). Glutamate is transferred on the 2-amino-5-(4,5-dihydroxy-2-cyclopenten-1-yl) moiety of the queuosine in the wobble position of the QUC anticodon. This is Glutamyl-Q tRNA(Asp) synthetase from Pseudomonas paraeruginosa (strain DSM 24068 / PA7) (Pseudomonas aeruginosa (strain PA7)).